The primary structure comprises 84 residues: Metallothionein-like protein 4A (84 aa).

Residues Met1 to Gly26 form a disordered region.

It belongs to the metallothionein superfamily. Type 15 family. In terms of tissue distribution, expressed specifically in seeds.

It is found in the cytoplasm. The protein resides in the nucleus. It localises to the cell membrane. In terms of biological role, metallothioneins have a high content of cysteine residues that bind various heavy metals. Functions as a metal chelator of copper (Cu) and zinc (Zn). Plays a role in storing and distributing Zn ion in seed. The chain is Metallothionein-like protein 4A (MT4A) from Arabidopsis thaliana (Mouse-ear cress).